We begin with the raw amino-acid sequence, 299 residues long: Telomere repeat-binding factor 2 (299 aa).

Residues 1 to 61 enclose the HTH myb-type domain; that stretch reads MGAPKQKWTP…KWRNISVTAL (61 aa). A DNA-binding region (H-T-H motif) is located at residues 28–57; it reads WRTILSDTEFSLILKSRSNVDLKDKWRNIS. The interval 93–116 is disordered; the sequence is LTNDDERAKPTSPGGSGGGSPRTC. The H15 domain occupies 121–189; the sequence is SITSLDKIIF…KIKHKYRFSS (69 aa). Residues 243–288 are a coiled coil; it reads EAAEAAARAVAEAEFAITEAEQAAKEAERAEAEAEAAQIFAKAAMK.

Belongs to the histone H1/H5 family. SMH subfamily. In terms of assembly, forms a homodimer and heterodimers with TRB1 or TRB3. Interacts with TRB1 and TRB3. Ubiquitous.

The protein resides in the nucleus. It is found in the nucleolus. The protein localises to the chromosome. Its function is as follows. Binds preferentially double-stranded telomeric repeats, but it can also bind to the single G-rich telomeric strand. The polypeptide is Telomere repeat-binding factor 2 (TRB2) (Arabidopsis thaliana (Mouse-ear cress)).